The following is a 450-amino-acid chain: Probable malate:quinone oxidoreductase (450 aa).

The protein belongs to the MQO family. The cofactor is FAD.

It catalyses the reaction (S)-malate + a quinone = a quinol + oxaloacetate. It functions in the pathway carbohydrate metabolism; tricarboxylic acid cycle; oxaloacetate from (S)-malate (quinone route): step 1/1. In Helicobacter pylori (strain P12), this protein is Probable malate:quinone oxidoreductase.